A 500-amino-acid polypeptide reads, in one-letter code: Xylan O-acetyltransferase 2 (500 aa).

Residues 1–25 (MGLPGRRNPLLSARRAAASLRRSRR) are Cytoplasmic-facing. A helical; Signal-anchor for type II membrane protein transmembrane segment spans residues 26–43 (LPVYVAAVFFVASVLLMF). Over 44 to 500 (RDEILYLTTA…RPPAAAGHVA (457 aa)) the chain is Lumenal. Positions 84-116 (PVLLGHGGKPEKHHSVTERHRPKVSAKRRPNKK) are disordered. Residues 91 to 102 (GKPEKHHSVTER) are compositionally biased toward basic and acidic residues. Positions 103–116 (HRPKVSAKRRPNKK) are enriched in basic residues. 4 cysteine pairs are disulfide-bonded: Cys-143–Cys-194, Cys-165–Cys-231, Cys-174–Cys-472, and Cys-388–Cys-468. Residues Asn-144 and Asn-154 are each glycosylated (N-linked (GlcNAc...) asparagine). Residues 218 to 220 (GDS) carry the GDS motif motif. The Nucleophile role is filled by Ser-220. 2 N-linked (GlcNAc...) asparagine glycosylation sites follow: Asn-260 and Asn-416. Asp-467 functions as the Proton donor in the catalytic mechanism. A DXXH motif motif is present at residues 467–470 (DCIH). His-470 acts as the Proton acceptor in catalysis.

This sequence belongs to the PC-esterase family. TBL subfamily. As to expression, expressed at low levels in roots and leaves.

The protein resides in the golgi apparatus membrane. Functionally, xylan acetyltransferase required for 2-O- and 3-O-monoacetylation of xylosyl residues in xylan. Catalyzes the 2-O-acetylation of xylan, followed by nonenzymatic acetyl migration to the O-3 position, resulting in products that are monoacetylated at both O-2 and O-3 positions. The chain is Xylan O-acetyltransferase 2 from Oryza sativa subsp. japonica (Rice).